Consider the following 186-residue polypeptide: Elongation factor P (186 aa).

This sequence belongs to the elongation factor P family.

The protein resides in the cytoplasm. It participates in protein biosynthesis; polypeptide chain elongation. Involved in peptide bond synthesis. Stimulates efficient translation and peptide-bond synthesis on native or reconstituted 70S ribosomes in vitro. Probably functions indirectly by altering the affinity of the ribosome for aminoacyl-tRNA, thus increasing their reactivity as acceptors for peptidyl transferase. This chain is Elongation factor P, found in Prochlorococcus marinus (strain MIT 9515).